We begin with the raw amino-acid sequence, 708 residues long: WD repeat-containing and planar cell polarity effector protein fritz homolog (708 aa).

2 WD repeats span residues 303 to 342 (PLRS…TLLA) and 343 to 382 (QADL…IRAQ).

The protein belongs to the WD repeat fritz family. As to quaternary structure, interacts with sept2-a. Interacts with intu and fuz; fuz, intu and wdpcp probably form the core CPLANE (ciliogenesis and planar polarity effectors) complex.

The protein localises to the cell membrane. It localises to the cytoplasm. The protein resides in the cytoskeleton. It is found in the cilium axoneme. Its subcellular location is the cilium basal body. In terms of biological role, probable effector of the planar cell polarity signaling pathway which regulates the septin cytoskeleton in both ciliogenesis and collective cell movements including covergent extension during gastrulation. Controls cell shape but not polarization during convergent extension. Proposed to function as core component of the CPLANE (ciliogenesis and planar polarity effectors) complex involved in the recruitment of peripheral IFT-A proteins to basal bodies. The sequence is that of WD repeat-containing and planar cell polarity effector protein fritz homolog (wdpcp) from Xenopus laevis (African clawed frog).